We begin with the raw amino-acid sequence, 912 residues long: MNMQDANKEESYSMYPKTSSPPPPTPTNMQIPIYQAPLQMYGYTQAPYLYPTQIPAYSFNMVNQNQPIYHQSGSPHHLPPQNNINGGSTTNNNNINKKKWHSNGITNNNGSSGNQGANSSGSGMSYNKSHTYHHNYSNNHIPMMASPNSGSNAGMKKQTNSSNGNGSSATSPSYSSYNSSSQYDLYKFDVTKLKNLKENSSNLIQLPLFINTTEAEFAAASVQRYELNMKALNLNSESLENSSVEKSSAHHHTKSHSIPKHNEEVKTETHGEEEDAHDKKPHASKDAHELKKKTEVKKEDAKQDRNEKVIQEPQATVLPVVDKKEPEESVEENTSKTSSPSPSPPAAKSWSAIASDAIKSRQASNKTVSGSMVTKTPISGTTAGVSSTNMAAATIGKSSSPLLSKQPQKKDKKYVPPSTKGIEPLGSIALRMCFDPDFISYVLRNKDVENKIPVHSIIPRGIINRANICFMSSVLQVLLYCKPFIDVINVLSTRNTNSRVGTSSCKLLDACLTMYKQFDKETYEKKFLENADDAEKTTESDAKKSSKSKSFQHCATADAVKPDEFYKTLSTIPKFKDLQWGHQEDAEEFLTHLLDQLHEELISAIDGLTDNEIQNMLQSINDEQLKVFFIRNLSRYGKAEFIKNASPRLKELIEKYGVINDDSTEENGWHEVSGSSKRGKKTKTAAKRTVEIVPSPISKLFGGQFRSVLDIPNNKESQSITLDPFQTIQLDISDAGVNDLETAFKKFSEYELLPFKSSSGNDVEAKKQTFIDKLPQVLLIQFKRFSFINNVNKDNAMTNYNAYNGRIEKIRKKIKYGHELIIPEESMSSITLKNNTSGIDDRRYKLTGVIYHHGVSSDGGHYTADVYHSEHNKWYRIDDVNITELEDDDVLKGGEEASDSRTAYILMYQKRN.

A compositionally biased stretch (basic and acidic residues) spans 1-11; it reads MNMQDANKEES. Disordered regions lie at residues 1-30, 68-176, 241-384, and 396-417; these read MNMQ…TNMQ, IYHQ…SYSS, NSSV…TTAG, and GKSS…YVPP. Low complexity-rich tracts occupy residues 82–95, 102–140, and 159–176; these read NNIN…NNNI, SNGI…SNNH, and TNSS…SYSS. Residues 249–259 are compositionally biased toward basic residues; the sequence is AHHHTKSHSIP. A compositionally biased stretch (basic and acidic residues) spans 260 to 310; sequence KHNEEVKTETHGEEEDAHDKKPHASKDAHELKKKTEVKKEDAKQDRNEKVI. The span at 335 to 355 shows a compositional bias: low complexity; that stretch reads SKTSSPSPSPPAAKSWSAIAS. 2 stretches are compositionally biased toward polar residues: residues 361-384 and 396-406; these read RQAS…TTAG and GKSSSPLLSKQ. The USP domain maps to 460–911; sequence RGIINRANIC…TAYILMYQKR (452 aa). Residue cysteine 469 is the Nucleophile of the active site. The active-site Proton acceptor is histidine 861.

The protein belongs to the peptidase C19 family. In terms of assembly, heterotetramer with BRE5; contains two molecules of BRE5 and two molecules of UBP3. Forms a complex composed of CDC48, DOA1, deubiquitinase UBP3 and probably BRE5. Within the complex interacts directly with DOA1 and CDC48 in a BRE5-independent manner.

The catalysed reaction is Thiol-dependent hydrolysis of ester, thioester, amide, peptide and isopeptide bonds formed by the C-terminal Gly of ubiquitin (a 76-residue protein attached to proteins as an intracellular targeting signal).. In terms of biological role, has an ATP-independent isopeptidase activity, cleaving at the C-terminus of the ubiquitin moiety in natural or engineered linear fusion proteins, irrespective of their size or the presence of an N-terminal extension to ubiquitin. Plays a role in regulation of silencing by interacting with SIR4. Also, in conjunction with BRE5, cleaves ubiquitin, leading to the subsequent mono-ubiquitination of SEC23. Required for ribophagy, a process which relocalizes ribosomal particles into the vacuole for degradation in response to starvation. The chain is Ubiquitin carboxyl-terminal hydrolase 3 (UBP3) from Saccharomyces cerevisiae (strain ATCC 204508 / S288c) (Baker's yeast).